The chain runs to 398 residues: FK506-binding protein 4 (398 aa).

Disordered stretches follow at residues 66-120 (EVDE…DEYE), 164-232 (VKHP…QLAK), and 245-288 (DLIA…KKNK). Residues 170-228 (EPLEDLYSDEDSEEYSDDELDQEIEEDDELDHDEASSEESDEDQEFYDAISEGDEDIDE) are compositionally biased toward acidic residues. Basic and acidic residues predominate over residues 264-287 (PETKKSKKTKDEKNTKATENEKKN). The PPIase FKBP-type domain occupies 312–398 (GSKVGMRYIG…TFDVKLVSLK (87 aa)).

Belongs to the FKBP-type PPIase family. FKBP3/4 subfamily. Binds to histones H3 and H4.

The protein resides in the nucleus. It carries out the reaction [protein]-peptidylproline (omega=180) = [protein]-peptidylproline (omega=0). With respect to regulation, inhibited by both FK506 and rapamycin. Functionally, PPIase that acts as a histone chaperone. Histone proline isomerase that increases the rate of cis-trans isomerization at prolines on the histone H3 N-terminal tail. Proline isomerization influences H3 methylation thereby regulating gene expression. The protein is FK506-binding protein 4 (FPR4) of Candida glabrata (strain ATCC 2001 / BCRC 20586 / JCM 3761 / NBRC 0622 / NRRL Y-65 / CBS 138) (Yeast).